The sequence spans 473 residues: MGERRRANASRGDKKVANGEKQHVGQWGRAWEVDYFSLASVIFLLAFAPLIVYYFVMSCDQYQCALTAPVLDLYSGKARLSDIWDKTPALTWTAVKIYLAWVSFQVFLYMFLPDILHKFVPGYEGGVQEGARTPAGLINKYQVNGLQAWTITHLLWFANAYHFHWFSPTIVIDNWIPLLWCANLLGYSVATFALVKANFFPTNANDCKFTGNFFYDYMMGIEFNPRIGKWFDFKLFFNGRPGIVAWTLINLSYAAKQQELYGQVTNSMILVNVLQAIYVVDFFWNESWYLKTIDICHDHFGWYLGWGDCVWLPYLYTLQGLYLVYNPVELSTTAAVAVLLLGLIGYYIFRMTNHQKDLFRRTNGNCKIWGKKPKSIECFYVSADGKRHYSKLMISGFWGVARHLNYTGDLMGSLAYCLACGFDHLLPYFYFIYMTILLVHRCIRDEHRCSSKYGKDWKLYTSAVPYRLLPGLF.

The disordered stretch occupies residues 1-20; the sequence is MGERRRANASRGDKKVANGE. 6 consecutive transmembrane segments (helical) span residues 36-56, 97-117, 175-195, 264-284, 304-324, and 329-349; these read FSLA…YYFV, IYLA…DILH, WIPL…FALV, VTNS…DFFW, LGWG…LYLV, and ELST…YYIF. Residues Lys-356, Arg-360, Met-393, Trp-398, and 405-406 each bind NADP(+); that span reads NY. A helical membrane pass occupies residues 419 to 439; sequence ACGFDHLLPYFYFIYMTILLV. Residues Asp-445, 449–453, and Tyr-460 contribute to the NADP(+) site; that span reads CSSKY.

Belongs to the ERG4/ERG24 family.

The protein localises to the endoplasmic reticulum membrane. It catalyses the reaction cholesterol + NADP(+) = 7-dehydrocholesterol + NADPH + H(+). It carries out the reaction 7-dehydrodesmosterol + NADPH + H(+) = desmosterol + NADP(+). Its pathway is steroid biosynthesis; cholesterol biosynthesis. Its function is as follows. Catalyzes the last step of the cholesterol synthesis pathway, which transforms cholesta-5,7-dien-3beta-ol (7-dehydrocholesterol,7-DHC) into cholesterol by reducing the C7-C8 double bond of its sterol core. Can also metabolize cholesta-5,7,24-trien-3beta-ol (7-dehydrodemosterol, 7-DHD) to desmosterol, which is then metabolized by the Delta(24)-sterol reductase (DHCR24) to cholesterol. Modulates ferroptosis (a form of regulated cell death driven by iron-dependent lipid peroxidation) through the metabolic breakdown of the anti-ferroptotic metabolites 7-DHC and 7-DHD which, when accumulated, divert the propagation of peroxyl radical-mediated damage from phospholipid components to its sterol core, protecting plasma and mitochondrial membranes from phospholipid autoxidation. The protein is 7-dehydrocholesterol reductase (dhcr7) of Xenopus laevis (African clawed frog).